The sequence spans 1142 residues: Probable serine/threonine-protein kinase fhkB (1142 aa).

Positions 1–16 (MSQDIQTQNSYSDELY) are enriched in polar residues. 3 disordered regions span residues 1–359 (MSQD…RLSQ), 374–404 (NTHT…KKQQ), and 432–451 (QIIG…QPPV). 2 stretches are compositionally biased toward low complexity: residues 17–72 (SSQI…FSQN) and 83–157 (QNSY…PSSQ). The span at 158–178 (KRFFQSQNDDFVPSSQVTSLQ) shows a compositional bias: polar residues. Positions 186–302 (IQQQQQQQQQ…DYEQENDDDD (117 aa)) form a coiled coil. Over residues 187–260 (QQQQQQQQQQ…QQTQQQQQQP (74 aa)) the composition is skewed to low complexity. 2 stretches are compositionally biased toward acidic residues: residues 261–277 (QEDD…DNYE) and 283–325 (EGEE…EEES). A compositionally biased stretch (low complexity) spans 333 to 348 (RALQSRSSQSRPLLRS). The span at 374-397 (NTHTNQLGQSSQQTNSPNVHFNSL) shows a compositional bias: polar residues. The stretch at 393-434 (HFNSLQQKKKQQQQQQQQQQQQQQQQQQQQQQQQQQQSQQII) forms a coiled coil. Residues 432 to 443 (QIIGSQSSQSSQ) are compositionally biased toward low complexity. In terms of domain architecture, FHA spans 480 to 551 (IVVGRSSSCD…NGSYINGELI (72 aa)). The 261-residue stretch at 625 to 885 (YYFVKEIGSG…IKEALNHPWF (261 aa)) folds into the Protein kinase domain. ATP-binding positions include 631–639 (IGSGGYGIV) and K654. The Proton acceptor role is filled by D747. The segment at 947–1142 (FDNNNNNNNN…HQQYTQHTTM (196 aa)) is disordered. Residues 949–1034 (NNNNNNNNNN…HNHNLNNHNH (86 aa)) show a composition bias toward low complexity. Residues 1035–1067 (NNNHHHNHNHNHNHNHNHNHNHNHNHNHNHNHN) are compositionally biased toward basic residues. The span at 1068 to 1133 (NHNNNNNNNN…NNINNNNNYH (66 aa)) shows a compositional bias: low complexity. The stretch at 1090 to 1132 (NNNNNNNNNNNNNNNNNNNNYYNNNINNINNNINNNINNNNNY) forms a coiled coil.

This sequence belongs to the protein kinase superfamily. CAMK Ser/Thr protein kinase family. CHK2 subfamily.

It carries out the reaction L-seryl-[protein] + ATP = O-phospho-L-seryl-[protein] + ADP + H(+). It catalyses the reaction L-threonyl-[protein] + ATP = O-phospho-L-threonyl-[protein] + ADP + H(+). The sequence is that of Probable serine/threonine-protein kinase fhkB (fhkB) from Dictyostelium discoideum (Social amoeba).